Here is a 105-residue protein sequence, read N- to C-terminus: Flagellar transcriptional regulator FlhD (105 aa).

It belongs to the FlhD family. As to quaternary structure, homodimer; disulfide-linked. Forms a heterohexamer composed of two FlhC and four FlhD subunits. Each FlhC binds a FlhD dimer, forming a heterotrimer, and a hexamer assembles by dimerization of two heterotrimers.

The protein localises to the cytoplasm. Functions in complex with FlhC as a master transcriptional regulator that regulates transcription of several flagellar and non-flagellar operons by binding to their promoter region. Activates expression of class 2 flagellar genes, including fliA, which is a flagellum-specific sigma factor that turns on the class 3 genes. Also regulates genes whose products function in a variety of physiological pathways. The polypeptide is Flagellar transcriptional regulator FlhD (Ralstonia pickettii (strain 12J)).